The primary structure comprises 323 residues: uncharacterized protein (323 aa).

The active-site Proton donor is the Tyr-59. 198–208 (SPLAQGLLGGK) is a binding site for NADP(+).

It belongs to the aldo/keto reductase family. Aldo/keto reductase 2 subfamily.

This is an uncharacterized protein from Mycobacterium tuberculosis (strain CDC 1551 / Oshkosh).